The sequence spans 292 residues: MGFVKVVKTKAYYSRYQVQFRRRREGKTDYQQRHRLITQDKNKYNSPKYRLVARITNTDVIAQVVYSKIVGDFVLCAAYAHELPRFGVKVGLTNYASCYATGLLLARRLLAKLKLADLYKGAEKVDGKVFLVKPVDDKPRPFKANLDVGLARTSTGAKVFAVLKGAVDGGIYVPHGETRFAGYNAESKKLNAETLRGYIFGKHVASYMTLLQTEDEDAYKKIFSQYIKNGVAPKDIETIYANAHKAIRANPAPAAKSTKSYKDIKSKNLSKRTLKQKKARVASIKASYKARL.

Belongs to the universal ribosomal protein uL18 family. As to quaternary structure, component of the large ribosomal subunit (LSU).

It is found in the cytoplasm. Its subcellular location is the nucleus. Component of the ribosome, a large ribonucleoprotein complex responsible for the synthesis of proteins in the cell. The small ribosomal subunit (SSU) binds messenger RNAs (mRNAs) and translates the encoded message by selecting cognate aminoacyl-transfer RNA (tRNA) molecules. The large subunit (LSU) contains the ribosomal catalytic site termed the peptidyl transferase center (PTC), which catalyzes the formation of peptide bonds, thereby polymerizing the amino acids delivered by tRNAs into a polypeptide chain. The nascent polypeptides leave the ribosome through a tunnel in the LSU and interact with protein factors that function in enzymatic processing, targeting, and the membrane insertion of nascent chains at the exit of the ribosomal tunnel. The protein is Large ribosomal subunit protein uL18 (rpl5) of Dictyostelium discoideum (Social amoeba).